Reading from the N-terminus, the 261-residue chain is uncharacterized protein (261 aa).

2 consecutive transmembrane segments (helical) span residues 4–21 (RLIA…LIVL) and 33–55 (FSIL…LVLF).

It is found in the cell membrane. This is an uncharacterized protein from Archaeoglobus fulgidus (strain ATCC 49558 / DSM 4304 / JCM 9628 / NBRC 100126 / VC-16).